A 283-amino-acid polypeptide reads, in one-letter code: Elongation factor Ts (283 aa).

An involved in Mg(2+) ion dislocation from EF-Tu region spans residues 80-83; that stretch reads TDFV.

Belongs to the EF-Ts family.

The protein localises to the cytoplasm. Functionally, associates with the EF-Tu.GDP complex and induces the exchange of GDP to GTP. It remains bound to the aminoacyl-tRNA.EF-Tu.GTP complex up to the GTP hydrolysis stage on the ribosome. In Salmonella choleraesuis (strain SC-B67), this protein is Elongation factor Ts.